The primary structure comprises 351 residues: MERRIHLMQLPREVLLGENLTGEVVSVAKRIGLTGKALVIYGPKTKEIAGRDVEDAIKSAYEVSSLTIRKGATMEEVERTIEKIKDEGIGWVIAVGGGSIIDVAKLSSFKTGVPFISFPTTASHDGIASANASIKDLGSKTSVKAVPPVAVIADVKVIKTAPYRYLAAGVGDTISNLTAVRDWQLAHRIKGEYYSEYAASLSLMSAKMVMRNADIIRLGNEESVRKVIKALISTGVAMSIAGSSRPASGAEHLFSHALDMLLDKPALHGEQTGLGTIIMAYLHGMKWERVRETLKRVGAPTNAYELGIDPEVIIEALTIAHTIRPERYTILGKDGLTREAAEKAAKITGVI.

Residues 98–102 (GSIID) and 120–123 (TTAS) each bind NAD(+). Asp125 is a substrate binding site. Ser129 lines the NAD(+) pocket. Asp172 provides a ligand contact to substrate. Positions 172 and 252 each coordinate Zn(2+). His256 lines the substrate pocket. His268 contributes to the Zn(2+) binding site.

This sequence belongs to the glycerol-1-phosphate dehydrogenase family. Zn(2+) is required as a cofactor.

The protein localises to the cytoplasm. The catalysed reaction is sn-glycerol 1-phosphate + NAD(+) = dihydroxyacetone phosphate + NADH + H(+). It catalyses the reaction sn-glycerol 1-phosphate + NADP(+) = dihydroxyacetone phosphate + NADPH + H(+). Its pathway is membrane lipid metabolism; glycerophospholipid metabolism. Functionally, catalyzes the NAD(P)H-dependent reduction of dihydroxyacetonephosphate (DHAP or glycerone phosphate) to glycerol 1-phosphate (G1P). The G1P thus generated is used as the glycerophosphate backbone of phospholipids in the cellular membranes of Archaea. The chain is Glycerol-1-phosphate dehydrogenase [NAD(P)+] from Thermococcus kodakarensis (strain ATCC BAA-918 / JCM 12380 / KOD1) (Pyrococcus kodakaraensis (strain KOD1)).